The primary structure comprises 713 residues: MSEGAAGASPPGAASAAAASAEEGTAAAAAAAAAGGGPDGGGEGAAEPPRELRCSDCIVWNRQQTWLCVVPLFIGFIGLGLSLMLLKWIVVGSVKEYVPTDLVDSKGMGQDPFFLSKPSSFPKAMETTTTTTSTTSPATPSAGGAASSRTPNRISTRLTTITRAPTRFPGHRVPIRASPRSTTARNTAAPPTVLSTTAPFFSSSTPGSRPPMPGAPSTQAMPSWPTAAYATSSYLHDSTPSWTLSPFQDAAAASSSSPSSTSSTTTTPETSTSPKFHTTTYSTERSEHFKPCRDKDLAYCLNDGECFVIETLTGSHKHCRCKEGYQGVRCDQFLPKTDSILSDPTDHLGIEFMESEDVYQRQVLSISCIIFGIVIVGMFCAAFYFKSKKQAKQIQEHLKESQNGKNYSLKASSTKSESLMKSHVHLQNYSKADRHPVTALEKIMESSFSAPQSFPEVTSPDRGSQPIKHHSPGQRSGMLHRNTFRRAPPSPRSRLGGIVGPAYQQLEESRIPDQDTIPCQGIEVRKTISHLPIQLWCVERPLDLKYVSNGLRTQQNASINMQLPSRETNPYFNSLDQKDLVGYLSPRANSVPIIPSMGLEETCMQMPGISDVKSIKWCKNSYSADIVNASMPVSDCLLEEQQEVKILLETVQEQIRILTDARRSEDFELASMETEDSASENTAFLPLSPTAKSEREAQFVLRNEIQRDSVLTK.

Over 1 to 362 (MSEGAAGASP…MESEDVYQRQ (362 aa)) the chain is Extracellular. 3 disordered regions span residues 28-48 (AAAAAAAGGGPDGGGEGAAEP), 119-220 (SSFP…STQA), and 251-282 (AAASSSSPSSTSSTTTTPETSTSPKFHTTTYS). Over residues 34–44 (AGGGPDGGGEG) the composition is skewed to gly residues. The span at 127 to 148 (TTTTTTSTTSPATPSAGGAASS) shows a compositional bias: low complexity. Residues 149-163 (RTPNRISTRLTTITR) are compositionally biased toward polar residues. 2 stretches are compositionally biased toward low complexity: residues 195 to 207 (STTAPFFSSSTPG) and 254 to 274 (SSSSPSSTSSTTTTPETSTSP). Residues 288–331 (HFKPCRDKDLAYCLNDGECFVIETLTGSHKHCRCKEGYQGVRCD) enclose the EGF-like domain. 3 cysteine pairs are disulfide-bonded: Cys-292–Cys-306, Cys-300–Cys-319, and Cys-321–Cys-330. The helical transmembrane segment at 363 to 383 (VLSISCIIFGIVIVGMFCAAF) threads the bilayer. Residues 384–713 (YFKSKKQAKQ…EIQRDSVLTK (330 aa)) lie on the Cytoplasmic side of the membrane. The interval 449–496 (SAPQSFPEVTSPDRGSQPIKHHSPGQRSGMLHRNTFRRAPPSPRSRLG) is disordered.

The protein belongs to the neuregulin family. In terms of assembly, interacts with ERBB4. In terms of processing, proteolytic cleavage close to the plasma membrane on the external face leads to the release of the soluble growth factor form. Extensive glycosylation precedes the proteolytic cleavage. In terms of tissue distribution, expressed in sympathetic, motor, and sensory neurons.

Its subcellular location is the cell membrane. It localises to the secreted. Its function is as follows. Direct ligand for the ERBB4 tyrosine kinase receptor. Binding results in ligand-stimulated tyrosine phosphorylation and activation of the receptor. Does not bind to the EGF receptor, ERBB2 or ERBB3 receptors. This Mus musculus (Mouse) protein is Pro-neuregulin-3, membrane-bound isoform (Nrg3).